The sequence spans 278 residues: MLCLTRLRANVNKVAFMEMVKDLRFRTEAPIAECGAALKETHGDVEKAMEVLRKKGAARAMKKRSRVTEHGSVVACVGGLFGAAVITVCSETDFAARSAQFQNTCARVKDALQRKIIDSKGDVLTNPMEAHRSLVEATAEDIRSSIAVLGENVTIKSVESLRLAPHVAEHISIGSYTHGSLDVPDVGRIAGVVAVSRLDPTREVQASTLTDVARHFVASSGAEGNYAHQNFFGTEETVGQWLKHHGLCFSSSLVVDFGKEPITHTASQPRNAVKHPEG.

Belongs to the EF-Ts family.

The protein resides in the mitochondrion. Associates with the EF-Tu.GDP complex and induces the exchange of GDP to GTP. It remains bound to the aminoacyl-tRNA.EF-Tu.GTP complex up to the GTP hydrolysis stage on the ribosome. This Trypanosoma cruzi (strain CL Brener) protein is Elongation factor Ts 2, mitochondrial.